The sequence spans 225 residues: Uridine kinase (225 aa).

12 to 19 (GGTGAGKT) lines the ATP pocket.

The protein belongs to the uridine kinase family.

It localises to the cytoplasm. The catalysed reaction is uridine + ATP = UMP + ADP + H(+). It carries out the reaction cytidine + ATP = CMP + ADP + H(+). The protein operates within pyrimidine metabolism; CTP biosynthesis via salvage pathway; CTP from cytidine: step 1/3. Its pathway is pyrimidine metabolism; UMP biosynthesis via salvage pathway; UMP from uridine: step 1/1. The protein is Uridine kinase of Halobacterium salinarum (strain ATCC 700922 / JCM 11081 / NRC-1) (Halobacterium halobium).